A 784-amino-acid chain; its full sequence is Cation/H(+) antiporter 26 (784 aa).

The next 11 membrane-spanning stretches (helical) occupy residues 38-58, 61-81, 97-117, 130-150, 201-221, 240-260, 286-306, 321-341, 351-371, 376-396, and 413-433; these read PLLLLLISLVSSLSSVFQALL, LANVDFVTQILAGIFLGPSAL, YFIIESFEAISFMFISYISTA, LAIINGLSLFLFPYVVGAIAC, LALSSIMVANCFGWGFFLLLI, FTKVLLLVGIVVVCRPIFNWI, TFLSETVGFPYVVGSVALGLV, IGSFCYAVLMPCYVIGIGNKV, IISLEFLIFTISAAKFASIVL, FQVPISHAVIVGFIVCIQGIY, and EAFGIMVISAMVHSTIFTAIV.

It belongs to the monovalent cation:proton antiporter 2 (CPA2) transporter (TC 2.A.37) family. CHX (TC 2.A.37.4) subfamily. As to expression, expressed in pollen.

The protein localises to the membrane. Its function is as follows. May operate as a cation/H(+) antiporter. This is Cation/H(+) antiporter 26 (CHX26) from Arabidopsis thaliana (Mouse-ear cress).